Consider the following 340-residue polypeptide: Solute-binding protein Dde_0634 (340 aa).

Residues 1-29 form the signal peptide; it reads MKSTFAALLIMVGCLVSGALLTGSEAAAA. (indol-3-yl)acetate-binding positions include tyrosine 99, arginine 172, 210–213, and tyrosine 235; that span reads TSLD.

This sequence belongs to the bacterial solute-binding protein 7 family. As to quaternary structure, the complex is comprised of an extracytoplasmic solute-binding protein and a heteromeric permease formed by two transmembrane proteins.

It localises to the periplasm. In terms of biological role, solute-binding protein that binds indole-3-pyruvate and indole-3-acetate (in vitro). Can also bind D-tryptophan (in vitro), but that is probably not a physiological ligand. Probably part of a tripartite ATP-independent periplasmic (TRAP) transport system that mediates solute transport into the cytoplasm. The polypeptide is Solute-binding protein Dde_0634 (Oleidesulfovibrio alaskensis (strain ATCC BAA-1058 / DSM 17464 / G20) (Desulfovibrio alaskensis)).